The following is a 387-amino-acid chain: Formate-dependent phosphoribosylglycinamide formyltransferase (387 aa).

N(1)-(5-phospho-beta-D-ribosyl)glycinamide contacts are provided by residues Glu-12–Leu-13 and Glu-72. ATP contacts are provided by residues Arg-104, Lys-145, Ser-150–Gln-155, Glu-185–Ile-188, and Glu-193. The region spanning Asp-109–Leu-300 is the ATP-grasp domain. Mg(2+) is bound by residues Glu-258 and Glu-270. Residues Asp-277, Lys-348, and Arg-355–Arg-356 each bind N(1)-(5-phospho-beta-D-ribosyl)glycinamide.

It belongs to the PurK/PurT family. As to quaternary structure, homodimer.

It catalyses the reaction N(1)-(5-phospho-beta-D-ribosyl)glycinamide + formate + ATP = N(2)-formyl-N(1)-(5-phospho-beta-D-ribosyl)glycinamide + ADP + phosphate + H(+). It functions in the pathway purine metabolism; IMP biosynthesis via de novo pathway; N(2)-formyl-N(1)-(5-phospho-D-ribosyl)glycinamide from N(1)-(5-phospho-D-ribosyl)glycinamide (formate route): step 1/1. Its function is as follows. Involved in the de novo purine biosynthesis. Catalyzes the transfer of formate to 5-phospho-ribosyl-glycinamide (GAR), producing 5-phospho-ribosyl-N-formylglycinamide (FGAR). Formate is provided by PurU via hydrolysis of 10-formyl-tetrahydrofolate. This Leptospira interrogans serogroup Icterohaemorrhagiae serovar copenhageni (strain Fiocruz L1-130) protein is Formate-dependent phosphoribosylglycinamide formyltransferase.